The chain runs to 81 residues: MSGTTGERPFSDIVTSIRYWVIHSITIPMLFVAGWLFVSTGLAYDVFGTPRPDEYYTQERLELPILKDRYNTDQQIQEFNK.

Residues 21–35 form a helical membrane-spanning segment; that stretch reads VIHSITIPMLFVAGW. H23 provides a ligand contact to heme.

This sequence belongs to the PsbE/PsbF family. As to quaternary structure, heterodimer of an alpha subunit and a beta subunit. PSII is composed of 1 copy each of membrane proteins PsbA, PsbB, PsbC, PsbD, PsbE, PsbF, PsbH, PsbI, PsbJ, PsbK, PsbL, PsbM, PsbT, PsbX, PsbY, PsbZ, Psb30/Ycf12, peripheral proteins PsbO, CyanoQ (PsbQ), PsbU, PsbV and a large number of cofactors. It forms dimeric complexes. Requires heme b as cofactor.

The protein resides in the cellular thylakoid membrane. In terms of biological role, this b-type cytochrome is tightly associated with the reaction center of photosystem II (PSII). PSII is a light-driven water:plastoquinone oxidoreductase that uses light energy to abstract electrons from H(2)O, generating O(2) and a proton gradient subsequently used for ATP formation. It consists of a core antenna complex that captures photons, and an electron transfer chain that converts photonic excitation into a charge separation. This chain is Cytochrome b559 subunit alpha, found in Gloeothece citriformis (strain PCC 7424) (Cyanothece sp. (strain PCC 7424)).